The sequence spans 349 residues: Ribonucleoside-diphosphate reductase small chain (349 aa).

Fe cation-binding residues include Asp99, Glu130, and His133. Tyr137 is a catalytic residue. Residues Glu192, Glu226, and His229 each coordinate Fe cation.

It belongs to the ribonucleoside diphosphate reductase small chain family. Heterodimer of a large and a small subunit. Requires Fe cation as cofactor.

The catalysed reaction is a 2'-deoxyribonucleoside 5'-diphosphate + [thioredoxin]-disulfide + H2O = a ribonucleoside 5'-diphosphate + [thioredoxin]-dithiol. Its function is as follows. Provides the precursors necessary for DNA synthesis. Catalyzes the biosynthesis of deoxyribonucleotides from the corresponding ribonucleotides. The protein is Ribonucleoside-diphosphate reductase small chain (RNR2) of Plasmodium falciparum (isolate Dd2).